The sequence spans 206 residues: Putative acetyltransferase OgpAT (206 aa).

The N-acetyltransferase domain maps to Val-5–Asp-205. Acetyl-CoA-binding positions include His-135–Leu-138, Gly-144–Gly-148, Asn-175–Arg-177, and His-184.

The protein belongs to the acetyltransferase family. As to quaternary structure, monomer.

In terms of biological role, binds acetyl-CoA, but not butyryl-CoA or decanoyl-CoA. May have acetyltransferase activity. The polypeptide is Putative acetyltransferase OgpAT (Oceanicola granulosus (strain ATCC BAA-861 / DSM 15982 / KCTC 12143 / HTCC2516)).